Here is a 343-residue protein sequence, read N- to C-terminus: Cytoplasmic tRNA 2-thiolation protein 1 (343 aa).

This sequence belongs to the TtcA family. CTU1/NCS6/ATPBD3 subfamily.

The protein localises to the cytoplasm. It functions in the pathway tRNA modification; 5-methoxycarbonylmethyl-2-thiouridine-tRNA biosynthesis. Plays a central role in 2-thiolation of mcm(5)S(2)U at tRNA wobble positions of tRNA(Lys), tRNA(Glu) and tRNA(Gln). Directly binds tRNAs and probably acts by catalyzing adenylation of tRNAs, an intermediate required for 2-thiolation. It is unclear whether it acts as a sulfurtransferase that transfers sulfur from thiocarboxylated URM1 onto the uridine of tRNAs at wobble position. In Drosophila sechellia (Fruit fly), this protein is Cytoplasmic tRNA 2-thiolation protein 1.